The chain runs to 480 residues: DnaJ homolog subfamily A member 3, mitochondrial (480 aa).

Arginine 58 is modified (omega-N-methylarginine; by CARM1). In terms of domain architecture, J spans 93 to 158; the sequence is DYYQILGVPR…VKRKQYDAYG (66 aa). Lysine 134 carries the post-translational modification N6-acetyllysine. The segment at 223–301 adopts a CR-type zinc-finger fold; sequence GVNKEFTVNI…CRGAGQAKQK (79 aa). Cysteine 236 provides a ligand contact to Zn(2+). CXXCXGXG motif repeat units follow at residues 236–243, 253–260, 275–282, and 289–296; these read CERCDGKG, CHYCGGSG, CRRCGGRG, and CVVCRGAG. An Omega-N-methylarginine; by CARM1 modification is found at arginine 238. Positions 239, 253, 256, 275, 278, 289, and 292 each coordinate Zn(2+). Arginine 293 carries the omega-N-methylarginine; by CARM1 modification. Serine 398 carries the post-translational modification Phosphoserine. Positions 437–468 are disordered; that stretch reads TVNGVTHTSTGGRTMDSSAGSKDRREAGEDNE. The span at 439-456 shows a compositional bias: polar residues; it reads NGVTHTSTGGRTMDSSAG.

Interacts with JAK2, HSPA9B and IFN-gammaR2 chain. Interacts with Ras GTPase-activating protein 1 (RASA1). Isoform 2 interacts with MUSK (via the cytoplasmic domain). Post-translationally, tyrosine phosphorylated.

It localises to the mitochondrion matrix. The protein localises to the cytoplasm. It is found in the cytosol. The protein resides in the postsynaptic cell membrane. Functionally, modulates apoptotic signal transduction or effector structures within the mitochondrial matrix. Affect cytochrome C release from the mitochondria and caspase 3 activation, but not caspase 8 activation. Isoform 1 increases apoptosis triggered by both TNF and the DNA-damaging agent mytomycin C; in sharp contrast, isoform 2 suppresses apoptosis. Can modulate IFN-gamma-mediated transcriptional activity. Isoform 2 may play a role in neuromuscular junction development as an effector of the MUSK signaling pathway. This is DnaJ homolog subfamily A member 3, mitochondrial (Dnaja3) from Mus musculus (Mouse).